Consider the following 74-residue polypeptide: Ribosome modulation factor (74 aa).

The protein belongs to the ribosome modulation factor family.

The protein resides in the cytoplasm. During stationary phase, converts 70S ribosomes to an inactive dimeric form (100S ribosomes). The chain is Ribosome modulation factor from Cellvibrio japonicus (strain Ueda107) (Pseudomonas fluorescens subsp. cellulosa).